The sequence spans 166 residues: Phospholipase A2 inhibitor clone 08 (166 aa).

A signal peptide spans M1 to G19. The C-type lectin domain occupies L46–E161. Disulfide bonds link C83/C160 and C138/C152. The N-linked (GlcNAc...) asparagine glycan is linked to N122.

The protein belongs to the alpha-type phospholipase A2 inhibitor family. Homotrimer; non-covalently linked. As to expression, expressed by the liver.

The protein localises to the secreted. Its function is as follows. This phospholipase A2 inhibitor binds directly phospholipase A2 in the presence or absence of calcium. This chain is Phospholipase A2 inhibitor clone 08, found in Bothrops moojeni (Lance-headed viper).